Consider the following 392-residue polypeptide: Probable myosin light chain kinase DDB_G0271550 (392 aa).

In terms of domain architecture, Protein kinase spans 20–278 (YEFGPEIGRG…ASQCIKHPWL (259 aa)). Residues 26-34 (IGRGAFSIV) and K49 each bind ATP. The active-site Proton acceptor is D142. Positions 317-326 (SQSTPNLHSA) are enriched in polar residues. The disordered stretch occupies residues 317–392 (SQSTPNLHSA…NNNNNNNNNI (76 aa)). A compositionally biased stretch (low complexity) spans 327–392 (NSNTNTNSLS…NNNNNNNNNI (66 aa)).

Belongs to the protein kinase superfamily. CAMK Ser/Thr protein kinase family. CaMK subfamily.

The enzyme catalyses L-seryl-[myosin light chain] + ATP = O-phospho-L-seryl-[myosin light chain] + ADP + H(+). It carries out the reaction L-threonyl-[myosin light chain] + ATP = O-phospho-L-threonyl-[myosin light chain] + ADP + H(+). Functionally, may phosphorylate a specific serine in the N-terminus of a myosin light chain. The sequence is that of Probable myosin light chain kinase DDB_G0271550 from Dictyostelium discoideum (Social amoeba).